A 295-amino-acid polypeptide reads, in one-letter code: Zygote arrest protein 1.S (295 aa).

Disordered regions lie at residues 80–115 (SVQC…TKTV) and 144–186 (EKGE…APAQ). Residues 144–176 (EKGEAVRSEGSEGGRQEGKQGDGEIKEQMKMDK) are compositionally biased toward basic and acidic residues. A 3CxxC-type zinc finger spans residues 197-280 (KYGYYHCKDC…RQDLCGRCKG (84 aa)).

This sequence belongs to the ZAR1 family. In terms of tissue distribution, ovary. Also expressed in lung and muscle.

It localises to the cytoplasm. It is found in the cytoplasmic ribonucleoprotein granule. Functionally, mRNA-binding protein required for maternal mRNA storage, translation and degradation during oocyte maturation. Probably promotes formation of some phase-separated membraneless compartment that stores maternal mRNAs in oocytes: acts by undergoing liquid-liquid phase separation upon binding to maternal mRNAs. Binds to the 3'-UTR of maternal mRNAs in immature oocytes, inhibiting their translation. The sequence is that of Zygote arrest protein 1.S (zar1.S) from Xenopus laevis (African clawed frog).